The sequence spans 370 residues: Protein PAM71, chloroplastic (370 aa).

The disordered stretch occupies residues 1 to 38; it reads MLSLNLSESLRIPFQNPRPPKSDFSSTSSSPSSSSRRC. The N-terminal 73 residues, 1 to 73, are a transit peptide targeting the chloroplast; sequence MLSLNLSESL…RNESQQLGFR (73 aa). Residues 22–38 show a composition bias toward low complexity; it reads SDFSSTSSSPSSSSRRC. Residues 74–113 lie on the Stromal side of the membrane; that stretch reads CFQRNDAACYLEKAESEEHDRNLDVLVESSIAHSRREIQR. The helical transmembrane segment at 114–134 threads the bilayer; that stretch reads VLMFLAVSGSVALLGTDPAFA. Over 135–161 the chain is Lumenal, thylakoid; that stretch reads ASSIPNVTQSLVTSFGDLGDISSGFAS. The chain crosses the membrane as a helical span at residues 162–182; that stretch reads AFLLIFFSELGDKTFFIAALL. Topologically, residues 183–188 are stromal; the sequence is AARNSA. Residues 189-209 form a helical membrane-spanning segment; that stretch reads ATVFVGTFGALGIMTIISVVL. Over 210-228 the chain is Lumenal, thylakoid; it reads GRTFHYVDEVLPFRFGGTD. A helical membrane pass occupies residues 229-249; sequence LPIDDIAAVCLLVYFGVSTLL. Residues 250-275 are Stromal-facing; the sequence is DAVSDEGKADEEQKEAELAVSELSGN. A helical transmembrane segment spans residues 276–296; the sequence is GAGIVAAANTIISTFALVFVA. Residues 297-315 are Lumenal, thylakoid-facing; it reads EWGDKSFFSTIALAAASSP. The helical transmembrane segment at 316–336 threads the bilayer; that stretch reads LGVIAGALAGHGAATLLAVLG. The Stromal segment spans residues 337–348; it reads GSLLGNFLSEKA. The helical transmembrane segment at 349 to 369 threads the bilayer; sequence IAYVGGVLFLVFAAVTVAEIV. Thr-370 is a topological domain (lumenal, thylakoid).

Belongs to the GDT1 family. Homodimer.

It localises to the plastid. It is found in the chloroplast membrane. Its subcellular location is the thylakoid. Mn(2+)/H(+) exchanger, which transport Mn(2+)from the chloroplast stroma into the acidic thylakoid lumen. Might be a chloroplast-localized Ca(2+)/H(+) antiporter. Regulates Ca(2+), Mn(2+) and pH homeostasis. Required for chloroplast development. This chain is Protein PAM71, chloroplastic, found in Arabidopsis thaliana (Mouse-ear cress).